A 654-amino-acid chain; its full sequence is Translation factor GUF1, mitochondrial (654 aa).

The tr-type G domain maps to 57–237 (ENYRNFSIVA…SVIKNIPSPV (181 aa)). Residues 66-73 (AHVDHGKS), 130-134 (DTPGH), and 184-187 (NKID) each bind GTP.

This sequence belongs to the TRAFAC class translation factor GTPase superfamily. Classic translation factor GTPase family. LepA subfamily.

It is found in the mitochondrion inner membrane. It catalyses the reaction GTP + H2O = GDP + phosphate + H(+). Functionally, promotes mitochondrial protein synthesis. May act as a fidelity factor of the translation reaction, by catalyzing a one-codon backward translocation of tRNAs on improperly translocated ribosomes. Binds to mitochondrial ribosomes in a GTP-dependent manner. This Candida albicans (strain SC5314 / ATCC MYA-2876) (Yeast) protein is Translation factor GUF1, mitochondrial.